Consider the following 157-residue polypeptide: Protein Smg (157 aa).

This sequence belongs to the Smg family.

The sequence is that of Protein Smg from Yersinia pestis (strain Pestoides F).